The following is a 221-amino-acid chain: uncharacterized protein (221 aa).

The 135-residue stretch at 33–167 (RPAKSAVMLY…VSPGANLELL (135 aa)) folds into the MOSC domain.

This is an uncharacterized protein from Bacillus subtilis (strain 168).